Consider the following 501-residue polypeptide: Cytochrome P450 71B23 (501 aa).

The chain crosses the membrane as a helical span at residues 1 to 21 (MSIFLCFLLLLLLLLVTIIFT). Cys443 lines the heme pocket.

It belongs to the cytochrome P450 family. Requires heme as cofactor.

Its subcellular location is the membrane. The sequence is that of Cytochrome P450 71B23 (CYP71B23) from Arabidopsis thaliana (Mouse-ear cress).